Here is a 419-residue protein sequence, read N- to C-terminus: Cyclin-B2-2 (419 aa).

The disordered stretch occupies residues 79–116; it reads QPSSAPLAPIGSERQKRTADSAFHGPADMECTKITSDD.

It belongs to the cyclin family. Cyclin AB subfamily. In terms of assembly, interacts with CDKB2-1. In terms of tissue distribution, expressed in the intercalary meristem and the elongation zone of internodes. Expressed in adventitious roots at all nodes under submergence conditions.

Its subcellular location is the nucleus. Its function is as follows. Involved in the control of the cell cycle at the G2/M (mitosis) transition. May associate to CDKB2-1 and activate CDKB2-1 kinase to promote cell division. The chain is Cyclin-B2-2 (CYCB2-2) from Oryza sativa subsp. indica (Rice).